A 164-amino-acid polypeptide reads, in one-letter code: 6,7-dimethyl-8-ribityllumazine synthase (164 aa).

5-amino-6-(D-ribitylamino)uracil contacts are provided by residues Phe-28, 62–64 (ALE), and 86–88 (AVI). (2S)-2-hydroxy-3-oxobutyl phosphate is bound at residue 91–92 (ET). His-94 (proton donor) is an active-site residue. Residue Asn-119 coordinates 5-amino-6-(D-ribitylamino)uracil. Residue Arg-133 coordinates (2S)-2-hydroxy-3-oxobutyl phosphate.

It belongs to the DMRL synthase family.

The catalysed reaction is (2S)-2-hydroxy-3-oxobutyl phosphate + 5-amino-6-(D-ribitylamino)uracil = 6,7-dimethyl-8-(1-D-ribityl)lumazine + phosphate + 2 H2O + H(+). It functions in the pathway cofactor biosynthesis; riboflavin biosynthesis; riboflavin from 2-hydroxy-3-oxobutyl phosphate and 5-amino-6-(D-ribitylamino)uracil: step 1/2. Catalyzes the formation of 6,7-dimethyl-8-ribityllumazine by condensation of 5-amino-6-(D-ribitylamino)uracil with 3,4-dihydroxy-2-butanone 4-phosphate. This is the penultimate step in the biosynthesis of riboflavin. The sequence is that of 6,7-dimethyl-8-ribityllumazine synthase from Nitrosomonas europaea (strain ATCC 19718 / CIP 103999 / KCTC 2705 / NBRC 14298).